We begin with the raw amino-acid sequence, 155 residues long: MRLLIWVLFVTLVTFVSNTTATSTFTDPQVTSGDIEALTHLLDVESNADAKRFLRTESKNDLKSDADTNGIDIEDEERGFIPSSITNAFSKMKTGWSNFKSNQFEKAFQRMNQKGETPTTLAKRLDIGKTAEKRFEKTYEKYTAWWINHHTNAGT.

The N-terminal stretch at 1–21 (MRLLIWVLFVTLVTFVSNTTA) is a signal peptide. The short motif at 52-78 (RFLRTESKNDLKSDADTNGIDIEDEER) is the RxLR-dEER element. The RABA-binding domain stretch occupies residues 105-155 (EKAFQRMNQKGETPTTLAKRLDIGKTAEKRFEKTYEKYTAWWINHHTNAGT).

This sequence belongs to the RxLR effector family. As to quaternary structure, interacts with Arabidopsis thaliana RABA GTPases including RABA1a, RABA1b, RABA1c, RABA1d, RABA1f, RABA2a, RABA2c, RABA2d, RABA4a, RABA4b and RABA4c.

It is found in the secreted. Its subcellular location is the host cell membrane. The protein localises to the host endomembrane system. Functionally, effector protein that contributes to pathogen virulence. Targets members of the RABA GTPases subfamily to inhibit vesicular secretion, leading to an accumulation of secretory proteins in the endoplasmic reticulum. This chain is RxLR effector protein 24, found in Phytophthora brassicae.